We begin with the raw amino-acid sequence, 93 residues long: Large ribosomal subunit protein bL27 (93 aa).

Residues M1–G22 form a disordered region.

It belongs to the bacterial ribosomal protein bL27 family.

The sequence is that of Large ribosomal subunit protein bL27 from Parvibaculum lavamentivorans (strain DS-1 / DSM 13023 / NCIMB 13966).